We begin with the raw amino-acid sequence, 637 residues long: GTP-binding protein 4 (637 aa).

At Ala-2 the chain carries N-acetylalanine. N6-acetyllysine; alternate is present on Lys-103. Lys-103 is covalently cross-linked (Glycyl lysine isopeptide (Lys-Gly) (interchain with G-Cter in SUMO2); alternate). Ser-122 carries the post-translational modification Phosphoserine. The OBG-type G domain maps to 169–340 (RTLLLCGYPN…VKTEACDRLL (172 aa)). Residues 175 to 182 (GYPNVGKS), 221 to 225 (DTPGI), and 289 to 292 (SKCE) contribute to the GTP site. Lys-332 participates in a covalent cross-link: Glycyl lysine isopeptide (Lys-Gly) (interchain with G-Cter in SUMO2). Disordered regions lie at residues 499-518 (SKEK…KVQR) and 525-637 (MRSL…KERR). A Glycyl lysine isopeptide (Lys-Gly) (interchain with G-Cter in SUMO2) cross-link involves residue Lys-535. The span at 542-555 (VRARRSRSVTRKRK) shows a compositional bias: basic residues. Ser-559 is modified (phosphoserine). Low complexity predominate over residues 563–574 (SSIARSRSRSCS). Positions 576–588 (TPRDVSGLRDVKM) are enriched in basic and acidic residues. Positions 589 to 607 (VKKAKTMMKKAQKKMNRLG) are enriched in basic residues. The span at 608–621 (KKGEADRHVFDMKP) shows a compositional bias: basic and acidic residues. Positions 622 to 637 (KHLLSGKRKAGKKERR) are enriched in basic residues.

This sequence belongs to the TRAFAC class OBG-HflX-like GTPase superfamily. OBG GTPase family. NOG subfamily. As to quaternary structure, associates with pre-60S ribosomal particles. Interacts with MINAS-60 (product of an alternative open reading frame of RBM10).

The protein localises to the nucleus. Its subcellular location is the nucleolus. In terms of biological role, involved in the biogenesis of the 60S ribosomal subunit. Acts as TP53 repressor, preventing TP53 stabilization and cell cycle arrest. The protein is GTP-binding protein 4 (Gtpbp4) of Rattus norvegicus (Rat).